The primary structure comprises 1507 residues: DNA-directed RNA polymerase subunit beta' (1507 aa).

The Zn(2+) site is built by Cys-71, Cys-73, Cys-86, and Cys-89. 3 residues coordinate Mg(2+): Asp-470, Asp-472, and Asp-474. Positions 800, 874, 881, and 884 each coordinate Zn(2+).

It belongs to the RNA polymerase beta' chain family. In terms of assembly, the RNAP catalytic core consists of 2 alpha, 1 beta, 1 beta' and 1 omega subunit. When a sigma factor is associated with the core the holoenzyme is formed, which can initiate transcription. The cofactor is Mg(2+). Requires Zn(2+) as cofactor.

The catalysed reaction is RNA(n) + a ribonucleoside 5'-triphosphate = RNA(n+1) + diphosphate. Its function is as follows. DNA-dependent RNA polymerase catalyzes the transcription of DNA into RNA using the four ribonucleoside triphosphates as substrates. The sequence is that of DNA-directed RNA polymerase subunit beta' from Nitratiruptor sp. (strain SB155-2).